Consider the following 891-residue polypeptide: 26S proteasome non-ATPase regulatory subunit 2 homolog A (891 aa).

Positions M1–L44 are disordered. The Nuclear localization signal motif lies at A14–L21. A compositionally biased stretch (basic and acidic residues) spans A14 to E37. K218 participates in a covalent cross-link: Glycyl lysine isopeptide (Lys-Gly) (interchain with G-Cter in ubiquitin). O-acetylthreonine is present on T219. PC repeat units lie at residues S414–A447, G448–I484, G485–V519, F522–G556, L565–K594, L674–M705, and A724–S739.

It belongs to the proteasome subunit S2 family. Component of the 19S regulatory particle (RP/PA700) base subcomplex of the 26S proteasome. The 26S proteasome is composed of a core protease (CP), known as the 20S proteasome, capped at one or both ends by the 19S regulatory particle (RP/PA700). The RP/PA700 complex is composed of at least 17 different subunits in two subcomplexes, the base and the lid, which form the portions proximal and distal to the 20S proteolytic core, respectively. Interacts with JMJ27. As to expression, expressed in stems, leaves, buds, flowers, siliques and developing seeds.

The protein localises to the nucleus. The protein resides in the cytoplasm. Acts as a regulatory subunit of the 26 proteasome which is involved in the ATP-dependent degradation of ubiquitinated proteins. Required during embryogenesis. Required for optimal plant growth and stress responses. Required for innate immunity. Prevents JMJ27 accumulation in non-drought conditions. The polypeptide is 26S proteasome non-ATPase regulatory subunit 2 homolog A (Arabidopsis thaliana (Mouse-ear cress)).